A 571-amino-acid chain; its full sequence is Double-stranded RNA-binding protein Staufen homolog 2 (571 aa).

Residues 8–75 enclose the DRBM 1 domain; it reads TPMCLVNELA…ANKALTESTL (68 aa). Phosphoserine occurs at positions 9 and 13. At Arg18 the chain carries Phosphothreonine. Ser21 carries the phosphoserine modification. Disordered regions lie at residues 71–94 and 178–203; these read TESTLPKPVQKPPKSNVNNNPGSI and ALQNEPIPEKSPQNGESGKEMDDDKD. Residues 83–94 are compositionally biased toward polar residues; sequence PKSNVNNNPGSI. The region spanning 95 to 181 is the DRBM 2 domain; that stretch reads TPTVELNGLA…AMKALQALQN (87 aa). Residue Ser188 is modified to Phosphoserine. The segment covering 194–203 has biased composition (basic and acidic residues); that stretch reads SGKEMDDDKD. 2 DRBM domains span residues 207 to 274 and 307 to 375; these read SEIS…ELKK and NPIS…QLGY. 2 short sequence motifs (nuclear localization signal) span residues 273-317 and 373-412; these read KKLP…QIQQ and LGYKASTSLQDQLDKTGENKGWSGPKPGFPEPANNTPKGI. Residues 381-571 are required for dendritic transport; it reads LQDQLDKTGE…QDCKKSKSVI (191 aa). Residues 382–413 form a disordered region; sequence QDQLDKTGENKGWSGPKPGFPEPANNTPKGIL. Phosphoserine is present on residues Ser395, Ser416, Ser426, Ser440, Ser456, and Ser493. Residues 546-571 form a disordered region; the sequence is LREKADNNQANPGSITQDCKKSKSVI. Polar residues predominate over residues 552–562; the sequence is NNQANPGSITQ.

As to quaternary structure, identified in a mRNP complex, at least composed of DHX9, DDX3X, ELAVL1, HNRNPU, IGF2BP1, ILF3, PABPC1, PCBP2, PTBP2, STAU1, STAU2, SYNCRIP and YBX1. Interacts with the exportin XPO5. This requires RNA and RAN bound to GTP. Interacts with microtubules. Isoform 2 and isoform 3 may also interact with ribosomes, and this association is independent of translation. Interacts with TRIM71 (via NHL repeats) in an RNA-dependent manner. In terms of tissue distribution, expressed in both somata and dendrites of hippocampal neurons.

The protein resides in the nucleus. It is found in the nucleolus. It localises to the cytoplasm. The protein localises to the endoplasmic reticulum. Its function is as follows. RNA-binding protein required for the microtubule-dependent transport of neuronal RNA from the cell body to the dendrite. As protein synthesis occurs within the dendrite, the localization of specific mRNAs to dendrites may be a prerequisite for neurite outgrowth and plasticity at sites distant from the cell body. In Rattus norvegicus (Rat), this protein is Double-stranded RNA-binding protein Staufen homolog 2 (Stau2).